Here is a 223-residue protein sequence, read N- to C-terminus: Killer cell lectin-like receptor subfamily B member 1A (223 aa).

Topologically, residues 1 to 43 (MDTARVYLSLKPSKTAAGAQCVSPPSLPPDACRCPRSHRLALK) are cytoplasmic. The short motif at 32–35 (CRCP) is the LCK-binding motif element. The helical; Signal-anchor for type II membrane protein transmembrane segment at 44–63 (LSCAGLILLVLALVGMSILV) threads the bilayer. Residues 64–223 (RVLVQKPSVE…LKCECMCNDS (160 aa)) lie on the Extracellular side of the membrane. The 120-residue stretch at 93–212 (KCPKDWLSHR…DSDNIWVCQK (120 aa)) folds into the C-type lectin domain. Cystine bridges form between Cys-94–Cys-105, Cys-122–Cys-210, and Cys-189–Cys-202.

Homodimer; disulfide-linked. Interacts with tyrosine kinase LCK. As to expression, expressed in natural killer cells.

Its subcellular location is the membrane. Plays a stimulatory role on natural killer (NK) cell cytotoxicity. In Rattus norvegicus (Rat), this protein is Killer cell lectin-like receptor subfamily B member 1A (Klrb1a).